We begin with the raw amino-acid sequence, 112 residues long: Beta-defensin 126 (112 aa).

The N-terminal stretch at 1-20 is a signal peptide; the sequence is MKSLLFTLAVFMLLAQLVSG. Residues 21-63 are in vitro binds to LPS, mediates antimicrobial activity and inhibits LPS-mediated inflammation; it reads NWYVKKCLNDVGICKKKCKPEELHVKNGRAMCGKQRDCCVPAD. Intrachain disulfides connect C27-C58, C34-C52, and C38-C59.

The protein belongs to the beta-defensin family. In terms of assembly, homodimer or homooligomer; disulfide-linked. O-glycosylated; glycans contain alpha(2,3)-linked sialic acids.

The protein localises to the secreted. Highly glycosylated atypical beta-defensin involved in several aspects of sperm function. Facilitates sperm transport in the female reproductive tract and contributes to sperm protection against immunodetection; both functions are probably implicating the negative surface charge provided by its O-linked oligosaccharides in the sperm glycocalyx. Involved in binding of sperm to oviductal epithelial cells to form a sperm reservoir until ovulation. Release from the sperm surface during capacitation and ovaluation by an elevation of oviductal fluid pH is unmasking other surface components and allows sperm to penetrate the cumulus matrix and bind to the zona pellucida of the oocyte. In vitro has antimicrobial activity and may inhibit LPS-mediated inflammation. The chain is Beta-defensin 126 (DEFB126) from Hylobates lar (Lar gibbon).